The sequence spans 254 residues: Zinc transporter GufA (254 aa).

Transmembrane regions (helical) follow at residues 4–24, 74–94, 112–132, 143–163, 176–196, 198–218, and 234–254; these read GLVA…PVLV, VAAG…LMPH, ALLF…AVGV, LSVA…VALA, FLAL…VLAL, LSSA…LYVI, and EATT…MSLG. The Zn(2+) site is built by asparagine 123, glutamate 126, glutamine 152, asparagine 153, glutamate 156, and glutamate 185.

This sequence belongs to the ZIP transporter (TC 2.A.5) family. As to quaternary structure, homodimer.

The protein resides in the cell inner membrane. Mediates the uptake of Zn(2+). The sequence is that of Zinc transporter GufA (gufA) from Myxococcus xanthus.